Consider the following 479-residue polypeptide: Anaerobic nitric oxide reductase flavorubredoxin (479 aa).

The segment at 30–210 (LRGSSYNSYL…PFSRLVTPKI (181 aa)) is zinc metallo-hydrolase. 6 residues coordinate Fe cation: histidine 79, glutamate 81, aspartate 83, histidine 147, aspartate 166, and histidine 227. One can recognise a Flavodoxin-like domain in the interval 254–393 (ITIFYDTMSN…LCREHGREIA (140 aa)). FMN-binding positions include 260 to 264 (TMSNN) and 342 to 369 (AFGSHGWSGGAVDRLSTRLQDAGFEMSL). The Rubredoxin-like domain maps to 423-474 (GPRMQCSVCQWIYDPAKGEPMQDVAPGTPWSEVPDNFLCPECSLGKDVFEEL). Fe cation-binding residues include cysteine 428, cysteine 431, cysteine 461, and cysteine 464.

It in the N-terminal section; belongs to the zinc metallo-hydrolase group 3 family. Homotetramer. Fe cation is required as a cofactor. It depends on FMN as a cofactor.

It is found in the cytoplasm. Its pathway is nitrogen metabolism; nitric oxide reduction. Anaerobic nitric oxide reductase; uses NADH to detoxify nitric oxide (NO), protecting several 4Fe-4S NO-sensitive enzymes. Has at least 2 reductase partners, only one of which (NorW, flavorubredoxin reductase) has been identified. NO probably binds to the di-iron center; electrons enter from the NorW at rubredoxin and are transferred sequentially to the FMN center and the di-iron center. Also able to function as an aerobic oxygen reductase. The protein is Anaerobic nitric oxide reductase flavorubredoxin of Shigella boydii serotype 4 (strain Sb227).